A 419-amino-acid chain; its full sequence is MRDTYSQPLARDAMAYVLAGGRGSRLKELTDNRAKPAVYFGGKSRIIDFALSNAINSGIRRIGVATQYKAHSLIRHMQRAWNFMRPERNESFDILPASQRVSEHQWYEGTADAVYQNLDIIASYAPKYMVILAGDHIYKMDYELMLRQHVESGADVTIGCLVVPRIEATGFGVMAVDTSDTITAFVEKPANPPGIPGNEDMALASMGIYVFDTKFLFDILREDAADPSSSRDFGNDIIPKIVRNGKAVAHRFTASCIRAAEEIEEYWRDVGTLDAYFEANLDLTDVVPKLNMYDRDWPIWTDQIIAAPAKFVHDEDGRRGMAISSLISQDCIVSGAIARRSLLFTGVKMGSFSSCEEAVILPYCNIGRGARLSRVILDSGVRIPEGLVVGEDPELDARRFQRTESGVCLITKRMIDQLA.

Alpha-D-glucose 1-phosphate-binding positions include Tyr107, Gly172, 187 to 188, and Ser205; that span reads EK.

The protein belongs to the bacterial/plant glucose-1-phosphate adenylyltransferase family. Homotetramer.

It catalyses the reaction alpha-D-glucose 1-phosphate + ATP + H(+) = ADP-alpha-D-glucose + diphosphate. It participates in glycan biosynthesis; glycogen biosynthesis. In terms of biological role, involved in the biosynthesis of ADP-glucose, a building block required for the elongation reactions to produce glycogen. Catalyzes the reaction between ATP and alpha-D-glucose 1-phosphate (G1P) to produce pyrophosphate and ADP-Glc. This Novosphingobium aromaticivorans (strain ATCC 700278 / DSM 12444 / CCUG 56034 / CIP 105152 / NBRC 16084 / F199) protein is Glucose-1-phosphate adenylyltransferase.